A 703-amino-acid chain; its full sequence is Protein O-mannosyl-transferase TMEM260 (703 aa).

8 helical membrane-spanning segments follow: residues 20 to 40 (GALR…TLTL), 68 to 88 (PLFT…SVAY), 90 to 110 (VNLL…YTVF), 137 to 157 (IAAE…ALTV), 182 to 202 (SLCN…WILF), 218 to 238 (LTLA…SSYL), 314 to 334 (KSSV…FFAW), and 352 to 372 (FWLQ…ATLV). N403 and N564 each carry an N-linked (GlcNAc...) asparagine glycan.

This sequence belongs to the glycosyltransferase 117 (GT117) family.

The protein resides in the endoplasmic reticulum membrane. It carries out the reaction a di-trans,poly-cis-dolichyl beta-D-mannosyl phosphate + L-seryl-[protein] = 3-O-(alpha-D-mannosyl)-L-seryl-[protein] + a di-trans,poly-cis-dolichyl phosphate + H(+). The catalysed reaction is a di-trans,poly-cis-dolichyl beta-D-mannosyl phosphate + L-threonyl-[protein] = 3-O-(alpha-D-mannosyl)-L-threonyl-[protein] + a di-trans,poly-cis-dolichyl phosphate + H(+). In terms of biological role, O-mannosyl-transferase that transfers mannosyl residues to the hydroxyl group of serine or threonine residues of proteins. Specifically glycosylates the IPT/TIG domain of target proteins, such as MET and MST1R/RON. TMEM260-mediated O-mannosylated residues are composed of single mannose glycans that are not elongated or modified. In Mus musculus (Mouse), this protein is Protein O-mannosyl-transferase TMEM260.